A 475-amino-acid polypeptide reads, in one-letter code: 23S rRNA (uracil(1939)-C(5))-methyltransferase RlmD (475 aa).

One can recognise a TRAM domain in the interval 1–76; sequence MHRGDKPVNI…SRFSKAKVRE (76 aa). The [4Fe-4S] cluster site is built by C89, C95, C98, and C178. S-adenosyl-L-methionine is bound by residues Q299, F328, N333, E349, D377, and D398. The active-site Nucleophile is the C431.

This sequence belongs to the class I-like SAM-binding methyltransferase superfamily. RNA M5U methyltransferase family. RlmD subfamily.

The enzyme catalyses uridine(1939) in 23S rRNA + S-adenosyl-L-methionine = 5-methyluridine(1939) in 23S rRNA + S-adenosyl-L-homocysteine + H(+). Catalyzes the formation of 5-methyl-uridine at position 1939 (m5U1939) in 23S rRNA. The protein is 23S rRNA (uracil(1939)-C(5))-methyltransferase RlmD of Polynucleobacter necessarius subsp. necessarius (strain STIR1).